The sequence spans 110 residues: ATP-dependent Clp protease adapter protein ClpS (110 aa).

This sequence belongs to the ClpS family. In terms of assembly, binds to the N-terminal domain of the chaperone ClpA.

In terms of biological role, involved in the modulation of the specificity of the ClpAP-mediated ATP-dependent protein degradation. The sequence is that of ATP-dependent Clp protease adapter protein ClpS from Bartonella henselae (strain ATCC 49882 / DSM 28221 / CCUG 30454 / Houston 1) (Rochalimaea henselae).